We begin with the raw amino-acid sequence, 33 residues long: Photosystem II reaction center protein Psb30 (33 aa).

A helical membrane pass occupies residues 5-25; that stretch reads VIAQLTMLTIAVITGPLVIFF.

The protein belongs to the Psb30/Ycf12 family. PSII is composed of 1 copy each of membrane proteins PsbA, PsbB, PsbC, PsbD, PsbE, PsbF, PsbH, PsbI, PsbJ, PsbK, PsbL, PsbM, PsbT, PsbX, PsbY, PsbZ, Psb30/Ycf12, peripheral proteins of the oxygen-evolving complex and a large number of cofactors. It forms dimeric complexes.

The protein localises to the plastid. It is found in the chloroplast thylakoid membrane. In terms of biological role, a core subunit of photosystem II (PSII), probably helps stabilize the reaction center. This Welwitschia mirabilis (Tree tumbo) protein is Photosystem II reaction center protein Psb30.